Reading from the N-terminus, the 185-residue chain is Elongation factor P (185 aa).

The protein belongs to the elongation factor P family.

The protein localises to the cytoplasm. It participates in protein biosynthesis; polypeptide chain elongation. Involved in peptide bond synthesis. Stimulates efficient translation and peptide-bond synthesis on native or reconstituted 70S ribosomes in vitro. Probably functions indirectly by altering the affinity of the ribosome for aminoacyl-tRNA, thus increasing their reactivity as acceptors for peptidyl transferase. This chain is Elongation factor P, found in Caldicellulosiruptor bescii (strain ATCC BAA-1888 / DSM 6725 / KCTC 15123 / Z-1320) (Anaerocellum thermophilum).